The chain runs to 202 residues: 3-isopropylmalate dehydratase small subunit 1 (202 aa).

This sequence belongs to the LeuD family. LeuD type 1 subfamily. Heterodimer of LeuC and LeuD.

The enzyme catalyses (2R,3S)-3-isopropylmalate = (2S)-2-isopropylmalate. It participates in amino-acid biosynthesis; L-leucine biosynthesis; L-leucine from 3-methyl-2-oxobutanoate: step 2/4. Its function is as follows. Catalyzes the isomerization between 2-isopropylmalate and 3-isopropylmalate, via the formation of 2-isopropylmaleate. This Mannheimia succiniciproducens (strain KCTC 0769BP / MBEL55E) protein is 3-isopropylmalate dehydratase small subunit 1.